Reading from the N-terminus, the 350-residue chain is uncharacterized protein (350 aa).

Over residues 197 to 212 (KNDNSEDNRSEDDLKS) the composition is skewed to basic and acidic residues. Positions 197 to 217 (KNDNSEDNRSEDDLKSSQDPV) are disordered.

It is found in the plastid. It localises to the chloroplast. This is an uncharacterized protein from Euglena gracilis.